A 396-amino-acid polypeptide reads, in one-letter code: Probable sugar efflux transporter (396 aa).

Transmembrane regions (helical) follow at residues 15–35 (VVTLAIAAFIFNTTEFVPVGL), 50–70 (VGIMLTIYAWVVAVMSLPFML), 81–101 (LICLFVLFIASHVLSFLAWNF), 103–123 (VLVISRIGIAFAHAIFWSITA), 136–156 (AQALSLIATGTALAMVLGLPI), 169–189 (TFFAIGMGALITLLCLIKLLP), 209–229 (PALMSLYVLTVVVVTAHYTAY), 246–266 (FATVLLLILGGAGIIGSLVFG), 275–295 (SLVSIAIALLVVCLLLLLPAA), 301–321 (LAILSIFWGIAIMVIGLGMQV), 333–353 (VAMALFSGIFNIGIGAGALVG), and 364–384 (AIGYIGAIPACAALVWAVLIF).

The protein belongs to the major facilitator superfamily. SotB (TC 2.A.1.2) family.

Its subcellular location is the cell inner membrane. Involved in the efflux of sugars. The physiological role may be the reduction of the intracellular concentration of toxic sugars or sugar metabolites. This is Probable sugar efflux transporter from Salmonella agona (strain SL483).